The chain runs to 3174 residues: Intermembrane lipid transfer protein VPS13A (3174 aa).

Residues 3–116 (FESVVVDVLN…LMEAKQQELK (114 aa)) enclose the Chorein N-terminal domain. TPR repeat units lie at residues 212–245 (LFAY…ENIV), 373–406 (LTSK…QTAE), and 537–575 (IDSF…NPLD). S839 is subject to Phosphoserine. Residues 842–848 (EFFDAPC) carry the FFAT motif. 2 TPR repeats span residues 1256–1289 (VIDL…LLPL) and 1291–1320 (LEVV…KPME). S1416 is subject to Phosphoserine. Residues 2009–2041 (YEGDTLLGTASPENEFNIPLGSYRSFIFLKPED) form a TPR 6 repeat. The 246-residue stretch at 2209–2454 (VAFHSPYWMV…VFYTWADPVG (246 aa)) folds into the SHR-BD domain. TPR repeat units lie at residues 2568–2601 (PMSV…DTNV), 2717–2751 (LGFI…FKEE), and 2860–2898 (ILGL…PEEF). Positions 2751–3174 (EYKTASLVDQ…QEAREPSPSL (424 aa)) are required for mitochondrial localization. Residues 2953-3027 (PAGFREGITR…SSTFQGIKRA (75 aa)) form a required for lipid droplet localization region. A TPR 10 repeat occupies 3086 to 3119 (MLMITRRGVLFVTKGTFGQLTCEWQYSFDEFTKE).

It belongs to the VPS13 family. In terms of assembly, interacts (via FFAT motif) with VAPA and VAPB. Interacts with RAB7A. Interacts with XK. In terms of tissue distribution, expressed in red blood cells (at protein level). Widely expressed, with high expression in brain, heart, skeletal muscle and kidney.

It localises to the mitochondrion outer membrane. The protein resides in the endoplasmic reticulum membrane. It is found in the endosome membrane. The protein localises to the lysosome membrane. Its subcellular location is the lipid droplet. It localises to the golgi apparatus. The protein resides in the cytoplasmic vesicle. It is found in the secretory vesicle. The protein localises to the neuronal dense core vesicle. Its function is as follows. Mediates the transfer of lipids between membranes at organelle contact sites. Binds phospholipids. Required for the formation or stabilization of ER-mitochondria contact sites which enable transfer of lipids between the ER and mitochondria. Negatively regulates lipid droplet size and motility. Required for efficient lysosomal protein degradation. The protein is Intermembrane lipid transfer protein VPS13A (VPS13A) of Homo sapiens (Human).